We begin with the raw amino-acid sequence, 156 residues long: V-type proton ATPase 16 kDa proteolipid subunit c (156 aa).

The Lumenal segment spans residues 1–7 (MAENPIY). The helical transmembrane segment at 8–30 (GPFFGVMGAASAIIFSALGAAYG) threads the bilayer. Over 31 to 52 (TAKSGTGIAAMSVMRPELIMKS) the chain is Cytoplasmic. The helical transmembrane segment at 53–73 (IIPVVMAGIIAIYGLVVAVLI) threads the bilayer. Residues 74 to 92 (AGSLDSPSNNYTLYRGFIH) are Lumenal-facing. Residues 93–114 (LGAGLAVGFSGLAAGFAIGIVG) form a helical membrane-spanning segment. Topologically, residues 115-126 (DAGVRGTAQQPR) are cytoplasmic. The helical transmembrane segment at 127–152 (LFVGMILILIFAEVLGLYGLIVAIYL) threads the bilayer. Over 153–156 (YTKQ) the chain is Lumenal.

It belongs to the V-ATPase proteolipid subunit family. V-ATPase is a heteromultimeric enzyme made up of two complexes: the ATP-hydrolytic V1 complex and the proton translocation V0 complex. The V1 complex consists of three catalytic AB heterodimers that form a heterohexamer, three peripheral stalks each consisting of EG heterodimers, one central rotor including subunits D and F, and the regulatory subunits C and H. The proton translocation complex V0 consists of the proton transport subunit a, a ring of proteolipid subunits c9c'', rotary subunit d, subunits e and f, and the accessory subunits VhaAC45 and ATP6AP2.

It is found in the membrane. Proton-conducting pore forming subunit of the V0 complex of vacuolar(H+)-ATPase (V-ATPase), a multisubunit enzyme composed of a peripheral complex (V1) that hydrolyzes ATP and a membrane integral complex (V0) that translocates protons. V-ATPase is responsible for acidifying and maintaining the pH of intracellular compartments and in some cell types, is targeted to the plasma membrane, where it is responsible for acidifying the extracellular environment. The chain is V-type proton ATPase 16 kDa proteolipid subunit c (VHA16) from Manduca sexta (Tobacco hawkmoth).